The sequence spans 678 residues: UvrABC system protein C (678 aa).

Residues 1 to 13 show a composition bias toward basic residues; the sequence is MKKNISYGKHKTF. The tract at residues 1–25 is disordered; sequence MKKNISYGKHKTFPSKLNGLEKQHS. One can recognise a GIY-YIG domain in the interval 69–147; sequence HKPGVYRMFD…IKRLHPRFNV (79 aa). The UVR domain occupies 257–292; it reads QSVKNDMIQAMHKAAEDLDFEQAAVYRDRLSALSHI.

This sequence belongs to the UvrC family. As to quaternary structure, interacts with UvrB in an incision complex.

It localises to the cytoplasm. Its function is as follows. The UvrABC repair system catalyzes the recognition and processing of DNA lesions. UvrC both incises the 5' and 3' sides of the lesion. The N-terminal half is responsible for the 3' incision and the C-terminal half is responsible for the 5' incision. This is UvrABC system protein C from Bartonella quintana (strain Toulouse) (Rochalimaea quintana).